The chain runs to 313 residues: MTDLDSSLPPSVRTAGDSWTITELVGATALGVAAARAAETAGPDPLIRDEFAGLLVSSAGPAWARLADPEQSWLDDDPHGKRAHRVGIDYQAVRTHYFDEYFDGALRAGIRQVVILAAGLDSRAYRLNWPAGTTVYEIDQPKVLEYKTETLQRHGATPAAVRRPVPVDLRDDWPAALTAAGFQAARPTAWLAEGLLPYLPSDAQDRLFEMVTALSAAGSQVAVEVFGMNSRSNAQRWLRMRERLGLDVNVAALTYHEPDRSDAAAWLTGHGWRVHSVDNRDEMARLGRPVPEDLSDEAVRSTLLRAHLGGSTG.

S-adenosyl-L-methionine is bound by residues aspartate 139 and aspartate 168–leucine 169.

This sequence belongs to the UPF0677 family.

Exhibits S-adenosyl-L-methionine-dependent methyltransferase activity. In Mycobacterium avium (strain 104), this protein is Putative S-adenosyl-L-methionine-dependent methyltransferase MAV_5150.